We begin with the raw amino-acid sequence, 273 residues long: Proteasome subunit beta type-10 (273 aa).

Position 1 is an N-acetylmethionine (Met-1). The propeptide at 1–39 is removed in mature form; that stretch reads MLKPALEPRGGFSFENCQRNASLERVLPGLKVPHARKTG. Thr-40 functions as the Nucleophile in the catalytic mechanism. A Phosphoserine modification is found at Ser-230.

It belongs to the peptidase T1B family. The 26S proteasome consists of a 20S proteasome core and two 19S regulatory subunits. The 20S proteasome core is composed of 28 subunits that are arranged in four stacked rings, resulting in a barrel-shaped structure. The two end rings are each formed by seven alpha subunits, and the two central rings are each formed by seven beta subunits. The catalytic chamber with the active sites is on the inside of the barrel. Component of the immunoproteasome, where it displaces the equivalent housekeeping subunit PSMB7. Component of the spermatoproteasome, a form of the proteasome specifically found in testis. In terms of assembly, (Microbial infection) Interacts with HIV-1 TAT protein. In terms of processing, autocleaved. The resulting N-terminal Thr residue of the mature subunit is responsible for the nucleophile proteolytic activity.

The protein localises to the cytoplasm. The protein resides in the nucleus. It catalyses the reaction Cleavage of peptide bonds with very broad specificity.. In terms of biological role, the proteasome is a multicatalytic proteinase complex which is characterized by its ability to cleave peptides with Arg, Phe, Tyr, Leu, and Glu adjacent to the leaving group at neutral or slightly basic pH. The proteasome has an ATP-dependent proteolytic activity. This subunit is involved in antigen processing to generate class I binding peptides. The chain is Proteasome subunit beta type-10 (PSMB10) from Homo sapiens (Human).